We begin with the raw amino-acid sequence, 685 residues long: Coiled-coil domain-containing protein 8 homolog (685 aa).

Positions 93 to 127 (VGTYDSSNGSDSELSDFDTSKVKGNRSSSGRTRKV) are disordered. Phosphoserine is present on residues serine 142 and serine 146. 4 disordered regions span residues 207–263 (QRVK…GTRR), 281–538 (VPPF…KAEA), 558–579 (QRAE…TGAT), and 599–623 (REEA…KQVK). Residues 219–228 (EVGQTQQAST) are compositionally biased toward polar residues. Basic and acidic residues predominate over residues 246–256 (DSSRNTGDRSD). Low complexity-rich tracts occupy residues 299-329 (AENQ…PRAE), 337-353 (EAVA…PRAE), 361-401 (EAAA…PRAE), and 409-420 (EAAASPIAEAAA). Positions 425–440 (ELVDSPRAETAADPRA) are enriched in basic and acidic residues. The span at 458-468 (AAASPIAEAAA) shows a compositional bias: low complexity. The span at 473 to 488 (ELVDSPRAETAADPRA) shows a compositional bias: basic and acidic residues. Over residues 505–519 (EVAASPRAEAAASPR) the composition is skewed to low complexity. Residues 558-567 (QRAEAIDSQR) are compositionally biased toward basic and acidic residues. Residues 611–622 (SAGSGSRAQKQV) show a composition bias toward polar residues. The short motif at 647–653 (PRLPTLP) is the PxLPxI/L motif; mediates interaction with ANKRA2 element.

As to quaternary structure, component of the 3M complex, composed of core components CUL7, CCDC8 and OBSL1. Interacts (via PxLPxI/L motif) with ANKRA2 (via ankyrin repeats); may link the 3M complex to histone deacetylases including HDAC4 and HDAC5.

It localises to the cytoplasm. Its subcellular location is the cytoskeleton. It is found in the microtubule organizing center. The protein localises to the centrosome. In terms of biological role, core component of the 3M complex, a complex required to regulate microtubule dynamics and genome integrity. It is unclear how the 3M complex regulates microtubules, it could act by controlling the level of a microtubule stabilizer. Required for localization of CUL7 to the centrosome. This Mus musculus (Mouse) protein is Coiled-coil domain-containing protein 8 homolog (Ccdc8).